The chain runs to 938 residues: Isoleucine--tRNA ligase (938 aa).

Residues 58-68 carry the 'HIGH' region motif; it reads PYANGNIHIGH. Position 561 (Glu561) interacts with L-isoleucyl-5'-AMP. Positions 602–606 match the 'KMSKS' region motif; it reads KMSKS. ATP is bound at residue Lys605. Zn(2+) is bound by residues Cys901, Cys904, Cys921, and Cys924.

Belongs to the class-I aminoacyl-tRNA synthetase family. IleS type 1 subfamily. Monomer. Zn(2+) is required as a cofactor.

The protein resides in the cytoplasm. It carries out the reaction tRNA(Ile) + L-isoleucine + ATP = L-isoleucyl-tRNA(Ile) + AMP + diphosphate. Functionally, catalyzes the attachment of isoleucine to tRNA(Ile). As IleRS can inadvertently accommodate and process structurally similar amino acids such as valine, to avoid such errors it has two additional distinct tRNA(Ile)-dependent editing activities. One activity is designated as 'pretransfer' editing and involves the hydrolysis of activated Val-AMP. The other activity is designated 'posttransfer' editing and involves deacylation of mischarged Val-tRNA(Ile). The polypeptide is Isoleucine--tRNA ligase (Yersinia pestis bv. Antiqua (strain Angola)).